The following is a 723-amino-acid chain: Envelope glycoprotein H (723 aa).

The signal sequence occupies residues 1 to 23 (MSPATRFTVISCLVVSLITPSET). Residues 24 to 700 (SSWFDPFIEW…IIDIRQTSIF (677 aa)) lie on the Virion surface side of the membrane. N-linked (GlcNAc...) asparagine; by host glycosylation is found at N39, N45, N144, and N174. Residues 197-263 (HQFAIVLTFT…QSYRDDLLIV (67 aa)) are interaction with gL. N270, N340, N411, N543, N621, and N681 each carry an N-linked (GlcNAc...) asparagine; by host glycan. Residues 701 to 721 (MIMLYCSLGVLLLYGLYRLLH) traverse the membrane as a helical segment. Topologically, residues 722–723 (MI) are intravirion.

This sequence belongs to the herpesviridae glycoprotein H family. In terms of assembly, interacts with glycoprotein L (gL); this interaction is necessary for the correct processing and cell surface expression of gH. The heterodimer gH/gL seems to interact with gB trimers during fusion. Post-translationally, N-glycosylated, O-glycosylated, and sialylated.

It localises to the virion membrane. The protein resides in the host cell membrane. Its subcellular location is the host endosome membrane. Its function is as follows. The heterodimer glycoprotein H-glycoprotein L is required for the fusion of viral and plasma membranes leading to virus entry into the host cell. Following initial binding to host receptor, membrane fusion is mediated by the fusion machinery composed of gB and the heterodimer gH/gL. May also be involved in the fusion between the virion envelope and the outer nuclear membrane during virion morphogenesis. The sequence is that of Envelope glycoprotein H from Guinea pig cytomegalovirus (strain 22122) (GPCMV).